The primary structure comprises 410 residues: MAVPFYLPEGGADDVASSSSGASGNSSPHNHPLPSSASSSVSSSGVSSASASSASSSSSASSDGASSAASQSPNTTTSSATQTPMQSPLPTDQVLYALYEWVRMYQSQQSAPQIFQYPPPSPSCNFTGGDVFFPHGHPNPNSNPHPRTPRTSVSFSSGEEYNFFRQQQPQPHPSYPAPSTPQPMPPQSAPPMHCSHSYPQQSAHMMPHHSAPFGMGGTYYAGYTPPPTPNTASAGTSSSSAAFGWHGHPHSPFTSTSTPLSAPVAPKMRLQRSQSDAARRKRLTSTGEDEREYQSDHEATWDEFGDRYDNFTAGRERLQEFNGRIPPRKKKSSNSHSSSSNNPVCHTDSQPGGTSQAESGAIHGHISQQRQVERERQKAKAEKKKPQSFTWPTVVTVFVLAMGCGFFAAR.

4 disordered regions span residues 1 to 88, 126 to 207, 230 to 301, and 319 to 386; these read MAVP…MQSP, FTGG…HMMP, NTAS…EATW, and QEFN…KKKP. Composition is skewed to low complexity over residues 13 to 27 and 35 to 70; these read DDVA…GNSS and SSAS…SAAS. Positions 71–88 are enriched in polar residues; that stretch reads QSPNTTTSSATQTPMQSP. A compositionally biased stretch (low complexity) spans 134 to 145; the sequence is PHGHPNPNSNPH. Positions 149–159 are enriched in polar residues; that stretch reads PRTSVSFSSGE. Residues 170 to 189 show a composition bias toward pro residues; it reads QPHPSYPAPSTPQPMPPQSA. The span at 230–242 shows a compositional bias: low complexity; the sequence is NTASAGTSSSSAA. Residues 292-301 are compositionally biased toward basic and acidic residues; it reads EYQSDHEATW. Ser-295 is modified (phosphoserine). Residues 343-358 are compositionally biased toward polar residues; that stretch reads PVCHTDSQPGGTSQAE. Basic and acidic residues predominate over residues 371-380; the sequence is QVERERQKAK.

This sequence to D.melanogaster grim and rpr. In terms of assembly, interacts with Diap2 (via BIR2 and BIR3 domains).

Functionally, activator of apoptosis, with grim and rpr, that acts on the effector Dredd. Seems to act genetically upstream of baculoviral anti-apoptotic p35. Blocks Diap2 from binding and inactivating the effector caspase Drice. Might regulate apoptosis downstream of Clbn/NEMF. This Drosophila melanogaster (Fruit fly) protein is Cell death protein hid (hid).